The sequence spans 338 residues: Ketol-acid reductoisomerase (NADP(+)) (338 aa).

The 181-residue stretch at 1 to 181 (MKIYYDKDCN…GGGRAGIIET (181 aa)) folds into the KARI N-terminal Rossmann domain. Residues 24 to 27 (YGSQ), Arg-47, Ser-50, Ser-52, and 82 to 85 (DETQ) contribute to the NADP(+) site. His-107 is a catalytic residue. Gly-133 contacts NADP(+). In terms of domain architecture, KARI C-terminal knotted spans 182–327 (SFKEETETDL…ARLRSMMSWI (146 aa)). Residues Asp-190, Glu-194, Glu-226, and Glu-230 each contribute to the Mg(2+) site. Ser-251 is a substrate binding site.

It belongs to the ketol-acid reductoisomerase family. Mg(2+) is required as a cofactor.

The enzyme catalyses (2R)-2,3-dihydroxy-3-methylbutanoate + NADP(+) = (2S)-2-acetolactate + NADPH + H(+). It catalyses the reaction (2R,3R)-2,3-dihydroxy-3-methylpentanoate + NADP(+) = (S)-2-ethyl-2-hydroxy-3-oxobutanoate + NADPH + H(+). It participates in amino-acid biosynthesis; L-isoleucine biosynthesis; L-isoleucine from 2-oxobutanoate: step 2/4. The protein operates within amino-acid biosynthesis; L-valine biosynthesis; L-valine from pyruvate: step 2/4. Functionally, involved in the biosynthesis of branched-chain amino acids (BCAA). Catalyzes an alkyl-migration followed by a ketol-acid reduction of (S)-2-acetolactate (S2AL) to yield (R)-2,3-dihydroxy-isovalerate. In the isomerase reaction, S2AL is rearranged via a Mg-dependent methyl migration to produce 3-hydroxy-3-methyl-2-ketobutyrate (HMKB). In the reductase reaction, this 2-ketoacid undergoes a metal-dependent reduction by NADPH to yield (R)-2,3-dihydroxy-isovalerate. The protein is Ketol-acid reductoisomerase (NADP(+)) of Geobacter metallireducens (strain ATCC 53774 / DSM 7210 / GS-15).